We begin with the raw amino-acid sequence, 352 residues long: Carbohydrate sulfotransferase 11 (352 aa).

Topologically, residues 1–16 (MKPALLEVMRMNRICR) are cytoplasmic. Residues 17–37 (MVLATCFGSFILVIFYFQSML) form a helical; Signal-anchor for type II membrane protein membrane-spanning segment. At 38–352 (HPVMRRNPFG…YSVPNYLKLD (315 aa)) the chain is on the lumenal side. 3'-phosphoadenylyl sulfate-binding positions include 124-130 (PKVACTN) and 186-194 (REPFERLVS). N-linked (GlcNAc...) asparagine glycosylation is found at asparagine 205, asparagine 223, asparagine 321, and asparagine 342.

Belongs to the sulfotransferase 2 family. In terms of processing, N-glycosylated; required for activity and stability. Predominantly expressed in brain and kidney. Also expressed at weaker level in heart, spleen and lung. Expressed in developing chondrocytes.

Its subcellular location is the golgi apparatus membrane. It carries out the reaction chondroitin beta-D-glucuronate + n 3'-phosphoadenylyl sulfate = chondroitin 4'-sulfate + n adenosine 3',5'-bisphosphate + n H(+). Its function is as follows. Catalyzes the transfer of sulfate to position 4 of the N-acetylgalactosamine (GalNAc) residue of chondroitin. Chondroitin sulfate constitutes the predominant proteoglycan present in cartilage and is distributed on the surfaces of many cells and extracellular matrices. Can also sulfate Gal residues in desulfated dermatan sulfate. Preferentially sulfates in GlcA-&gt;GalNAc unit than in IdoA-&gt;GalNAc unit. Does not form 4, 6-di-O-sulfated GalNAc when chondroitin sulfate C is used as an acceptor. The chain is Carbohydrate sulfotransferase 11 (Chst11) from Mus musculus (Mouse).